Reading from the N-terminus, the 94-residue chain is Co-chaperonin GroES (94 aa).

This sequence belongs to the GroES chaperonin family. In terms of assembly, heptamer of 7 subunits arranged in a ring. Interacts with the chaperonin GroEL.

The protein resides in the cytoplasm. In terms of biological role, together with the chaperonin GroEL, plays an essential role in assisting protein folding. The GroEL-GroES system forms a nano-cage that allows encapsulation of the non-native substrate proteins and provides a physical environment optimized to promote and accelerate protein folding. GroES binds to the apical surface of the GroEL ring, thereby capping the opening of the GroEL channel. The chain is Co-chaperonin GroES from Halothermothrix orenii (strain H 168 / OCM 544 / DSM 9562).